The chain runs to 336 residues: Iron(3+)-hydroxamate import system permease protein FhuG (336 aa).

Transmembrane regions (helical) follow at residues 9 to 29, 63 to 83, 91 to 111, 124 to 144, 155 to 175, 193 to 213, 245 to 265, 285 to 305, and 313 to 333; these read LIVM…SLNL, IILS…LQSV, PGIL…IYFF, FMLP…IYIL, LILV…IFQL, IWGA…ILLL, ILLL…GGIA, TLIP…DTLA, and EIPV…YLLM.

The protein belongs to the binding-protein-dependent transport system permease family. FecCD subfamily. As to quaternary structure, the complex is composed of an ATP-binding protein (FhuC), two transmembrane proteins (FhuB and FhuG) and a solute-binding protein (FhuD or YxeB).

It is found in the cell membrane. Part of the ABC transporter complex FhuBGCD involved in iron(3+)-hydroxamate import. Responsible for the translocation of the substrate across the membrane. The protein is Iron(3+)-hydroxamate import system permease protein FhuG (fhuG) of Bacillus subtilis (strain 168).